A 1400-amino-acid chain; its full sequence is DNA-directed RNA polymerase subunit beta' (1400 aa).

Residues cysteine 71, cysteine 73, cysteine 86, and cysteine 89 each contribute to the Zn(2+) site. The Mg(2+) site is built by aspartate 462, aspartate 464, and aspartate 466. 4 residues coordinate Zn(2+): cysteine 811, cysteine 885, cysteine 892, and cysteine 895.

Belongs to the RNA polymerase beta' chain family. As to quaternary structure, the RNAP catalytic core consists of 2 alpha, 1 beta, 1 beta' and 1 omega subunit. When a sigma factor is associated with the core the holoenzyme is formed, which can initiate transcription. The cofactor is Mg(2+). Zn(2+) serves as cofactor.

It carries out the reaction RNA(n) + a ribonucleoside 5'-triphosphate = RNA(n+1) + diphosphate. Functionally, DNA-dependent RNA polymerase catalyzes the transcription of DNA into RNA using the four ribonucleoside triphosphates as substrates. In Brucella melitensis biotype 1 (strain ATCC 23456 / CCUG 17765 / NCTC 10094 / 16M), this protein is DNA-directed RNA polymerase subunit beta'.